Here is a 642-residue protein sequence, read N- to C-terminus: MHGLLLAAGLLSLPLHVLAHPQPSTTTSLAGRAGTVDLNEFRMAHRSSYTGNDEMMKQPSIASFRQGTYLEVATELVKQTMPNMEFRLVDDHYVGDSGIGHVRFRQTMHGIDIDNSDFNVNIGKDGKVLSHGNSFYTGPAPSSNPMVKRDFMDPMQALHGVRKALKLPIKADGATVQDMSEHKVMFKGTSGALSDPTAKLCYMAKEDGSLALTWRVETDIGDNWLLSYMDAKESAKVHNVVDYVAHATFQVYKWGLADPTEGNREILNNPWNLKTSPLTWLADGQNNFTATRGNNAIAQYNPDGGNDYENNYRPSPKNLKFEYPYSANMDPPKTYIDASVTQLFYTSNVCHDLYYMLGFTEKAGNFQVNNRGQGGKGGDYVILNAQDGSGTNNANFATPPDGQPGRMRAYIWTRANPPRDASFEAGTVIHEYTHGLSNRLCGGPANSRCLNAIESGGMGEGWGDFYATAIRLKPKDTRKTNYVKGGWVNNSPKGVRMYPYSTDMSVNPLVYTSNNKLNEVHAIGTVWCSMLYEVLWNLIDKHGKNDGPVPVFENGVPKDGKYLAMKIVMDAWPCIQPCNPNFVQARDAILDADKNLTKGANKCEIWKGFAKRGLGVGAKYDPKNRTGSNEVPKEYKYSAHME.

The first 19 residues, 1–19 (MHGLLLAAGLLSLPLHVLA), serve as a signal peptide directing secretion. Residues 20 to 246 (HPQPSTTTSL…VHNVVDYVAH (227 aa)) constitute a propeptide that is removed on maturation. A glycan (N-linked (GlcNAc...) asparagine) is linked at asparagine 287. Histidine 430 contributes to the Zn(2+) binding site. Glutamate 431 is a catalytic residue. Residue histidine 434 participates in Zn(2+) binding. Residues asparagine 595 and asparagine 624 are each glycosylated (N-linked (GlcNAc...) asparagine).

The protein belongs to the peptidase M36 family. Zn(2+) serves as cofactor.

It is found in the secreted. Secreted metalloproteinase that allows assimilation of proteinaceous substrates and probably acts as a virulence factor. The chain is Extracellular metalloproteinase 5 (MEP5) from Arthroderma gypseum (strain ATCC MYA-4604 / CBS 118893) (Microsporum gypseum).